We begin with the raw amino-acid sequence, 1024 residues long: Beta-galactosidase (1024 aa).

Residues Asn-103 and Asp-202 each contribute to the substrate site. Residue Asp-202 coordinates Na(+). Glu-417, His-419, and Glu-462 together coordinate Mg(2+). Residues Glu-462 and 538 to 541 (EYAH) each bind substrate. The active-site Proton donor is the Glu-462. Residue Glu-538 is the Nucleophile of the active site. Asn-598 contributes to the Mg(2+) binding site. Positions 602 and 605 each coordinate Na(+). Substrate-binding residues include Asn-605 and Trp-1000.

This sequence belongs to the glycosyl hydrolase 2 family. As to quaternary structure, homotetramer. Mg(2+) is required as a cofactor. It depends on Na(+) as a cofactor.

It carries out the reaction Hydrolysis of terminal non-reducing beta-D-galactose residues in beta-D-galactosides.. The chain is Beta-galactosidase from Escherichia coli O139:H28 (strain E24377A / ETEC).